A 333-amino-acid polypeptide reads, in one-letter code: Flotillin-like protein FloA (333 aa).

The next 2 helical transmembrane spans lie at 8-28 and 30-50; these read LMPI…FTFI and VGLW…TLVG.

The protein belongs to the flotillin-like FloA family. As to quaternary structure, homooligomerizes.

The protein localises to the cell membrane. The protein resides in the membrane raft. Its function is as follows. Found in functional membrane microdomains (FMM) that may be equivalent to eukaryotic membrane rafts. FMMs are highly dynamic and increase in number as cells age. Flotillins are thought to be important factors in membrane fluidity. In Desulfitobacterium hafniense (strain DSM 10664 / DCB-2), this protein is Flotillin-like protein FloA.